The primary structure comprises 569 residues: MQLMEYTQLALFLGLLALMSPVLGRFIGRAVLRGEQTWMHSVLGPVERLIYRASGIRPEARQSWRQYAASLCAFSAAGFLMTFGVLMLQDKLPLNPQGFPGLSWHLAFNTAVSFLTNTNWQSYAGESTVSHFSQMVGLAYHNFVSAAAGLAVAVAVMRGLASQESKTIGNFWADLVRSVLYVLLPISLVLAVVLVGQGVVQTMSAGTEVATLEGGRQFIAMGPTASQVAIKMLGTNGGGFFNANAAHPLENPTALSNLLQMLAIFIIPSSLVFTLGGAVSNRRHAWTVWFVMACLFMVGACSLYRAETLGTPLLTEVAQAPVTNMEGKEVRFGIFGSAMFATVTTDASCGAVNAMHDSLTPLGGLVTLVNMQMGEVIFGGVGSGLYGMVLFILLTVFLAGLMVGRTPDYLGKRIEGREVTLAMLALIIAATPPLLFSAVAAVSGWGQAALNNAGAHGFSEILYAYTSGVQNNGSAFAGLNANSPAWNVTIALAMLIGRFGIMLPMLGVAGSMASRKARPIGEFSFPVSGFTFGLLLTLVIVIVGALTYLPALALGPVVEHFQMLDGLLH.

The next 10 membrane-spanning stretches (helical) occupy residues 3–23, 68–88, 136–156, 179–199, 259–279, 284–304, 384–404, 422–442, 490–510, and 534–554; these read LMEYTQLALFLGLLALMSPVL, AASLCAFSAAGFLMTFGVLML, VGLAYHNFVSAAAGLAVAVAV, VLYVLLPISLVLAVVLVGQGV, LQMLAIFIIPSSLVFTLGGAV, HAWTVWFVMACLFMVGACSLY, GLYGMVLFILLTVFLAGLMVG, AMLALIIAATPPLLFSAVAAV, IALAMLIGRFGIMLPMLGVAG, and LLLTLVIVIVGALTYLPALAL.

It belongs to the KdpA family. As to quaternary structure, the system is composed of three essential subunits: KdpA, KdpB and KdpC.

It is found in the cell inner membrane. Functionally, part of the high-affinity ATP-driven potassium transport (or Kdp) system, which catalyzes the hydrolysis of ATP coupled with the electrogenic transport of potassium into the cytoplasm. This subunit binds the periplasmic potassium ions and delivers the ions to the membrane domain of KdpB through an intramembrane tunnel. This chain is Potassium-transporting ATPase potassium-binding subunit, found in Nitratidesulfovibrio vulgaris (strain ATCC 29579 / DSM 644 / CCUG 34227 / NCIMB 8303 / VKM B-1760 / Hildenborough) (Desulfovibrio vulgaris).